A 456-amino-acid polypeptide reads, in one-letter code: MLNSAMSVVILAAGKGTRMYSDLPKVLHKLAGKPMVQHVIDAAMTTGAQHVHLVYGHGGDLLKHELTDPALNWVLQAEQLGTGHAMQQAAPHFADDEDILMLYGDVPLISSQTLVHLREAKPQGGIGLLTVKLDDPAGYGRIVREKGAVVGIVEHKDASEAQRQINEINTGILIANGKDLKRWLSQLNNNNAQGEFYITDIIAMASAEGQRVEAVHPERLSEVEGVNNRLQLSALERIYQREQADKLLLAGVMLLDPARFDLRGELTHGRDVVMDVNVVVEGNVKLGNRVKIGAGCVIKNCIIGDDSEISPYSVLEDSVLEAQCTIGPFARLRPGSELAEGAHVGNFVELKKARLGKGSKAGHLSYLGDADIGSGVNIGAGTITCNYDGANKHKTVIGDDVFVGSDTQLVAPVNVASGATIGAGTTVTRDVAENELVISRVKQRHISGWQRPVKKK.

Residues 1–229 (MLNSAMSVVI…LSEVEGVNNR (229 aa)) form a pyrophosphorylase region. Residues 11-14 (LAAG), lysine 25, glutamine 76, 81-82 (GT), 103-105 (YGD), glycine 140, glutamate 154, asparagine 169, and asparagine 227 contribute to the UDP-N-acetyl-alpha-D-glucosamine site. Aspartate 105 serves as a coordination point for Mg(2+). Position 227 (asparagine 227) interacts with Mg(2+). Positions 230-250 (LQLSALERIYQREQADKLLLA) are linker. Positions 251–456 (GVMLLDPARF…SGWQRPVKKK (206 aa)) are N-acetyltransferase. The UDP-N-acetyl-alpha-D-glucosamine site is built by arginine 333 and lysine 351. Histidine 363 acts as the Proton acceptor in catalysis. UDP-N-acetyl-alpha-D-glucosamine contacts are provided by tyrosine 366 and asparagine 377. Residues alanine 380, 386–387 (NY), serine 405, alanine 423, and arginine 440 contribute to the acetyl-CoA site.

This sequence in the N-terminal section; belongs to the N-acetylglucosamine-1-phosphate uridyltransferase family. In the C-terminal section; belongs to the transferase hexapeptide repeat family. Homotrimer. Requires Mg(2+) as cofactor.

The protein resides in the cytoplasm. It catalyses the reaction alpha-D-glucosamine 1-phosphate + acetyl-CoA = N-acetyl-alpha-D-glucosamine 1-phosphate + CoA + H(+). It carries out the reaction N-acetyl-alpha-D-glucosamine 1-phosphate + UTP + H(+) = UDP-N-acetyl-alpha-D-glucosamine + diphosphate. It participates in nucleotide-sugar biosynthesis; UDP-N-acetyl-alpha-D-glucosamine biosynthesis; N-acetyl-alpha-D-glucosamine 1-phosphate from alpha-D-glucosamine 6-phosphate (route II): step 2/2. It functions in the pathway nucleotide-sugar biosynthesis; UDP-N-acetyl-alpha-D-glucosamine biosynthesis; UDP-N-acetyl-alpha-D-glucosamine from N-acetyl-alpha-D-glucosamine 1-phosphate: step 1/1. The protein operates within bacterial outer membrane biogenesis; LPS lipid A biosynthesis. Functionally, catalyzes the last two sequential reactions in the de novo biosynthetic pathway for UDP-N-acetylglucosamine (UDP-GlcNAc). The C-terminal domain catalyzes the transfer of acetyl group from acetyl coenzyme A to glucosamine-1-phosphate (GlcN-1-P) to produce N-acetylglucosamine-1-phosphate (GlcNAc-1-P), which is converted into UDP-GlcNAc by the transfer of uridine 5-monophosphate (from uridine 5-triphosphate), a reaction catalyzed by the N-terminal domain. This Pectobacterium atrosepticum (strain SCRI 1043 / ATCC BAA-672) (Erwinia carotovora subsp. atroseptica) protein is Bifunctional protein GlmU.